A 117-amino-acid chain; its full sequence is Large ribosomal subunit protein bL20 (117 aa).

This sequence belongs to the bacterial ribosomal protein bL20 family.

Binds directly to 23S ribosomal RNA and is necessary for the in vitro assembly process of the 50S ribosomal subunit. It is not involved in the protein synthesizing functions of that subunit. The polypeptide is Large ribosomal subunit protein bL20 (Finegoldia magna (strain ATCC 29328 / DSM 20472 / WAL 2508) (Peptostreptococcus magnus)).